The primary structure comprises 439 residues: Niacin transporter NiaP (439 aa).

A run of 12 helical transmembrane segments spans residues 20–40, 57–77, 84–104, 108–128, 143–163, 169–189, 253–273, 288–308, 316–336, 338–358, 374–394, and 407–427; these read LWVV…IAFI, WIVS…GGLA, TVFA…AFAP, WLLA…PVAV, FIVL…LVSY, FGWH…YVII, LMLW…FTWL, FEYV…AAWL, ATLA…GQAD, VFNI…AWGV, FGAG…PIVV, and VFMM…ILGE.

It belongs to the major facilitator superfamily. Sugar transporter (TC 2.A.1.1) family.

The protein localises to the cell inner membrane. Functionally, functions as a high-affinity transporter of niacin (nicotinamide or nicotinate). Probably substantially contributes to niacin transport when its concentration in the medium is very low. This Acinetobacter baylyi (strain ATCC 33305 / BD413 / ADP1) protein is Niacin transporter NiaP.